Reading from the N-terminus, the 367-residue chain is Voltage-gated potassium channel subunit beta-2 (367 aa).

Residues serine 9, serine 14, and serine 20 each carry the phosphoserine modification. Position 28 is an asymmetric dimethylarginine; alternate (arginine 28). The residue at position 28 (arginine 28) is an Omega-N-methylarginine; alternate. Serine 31 is modified (phosphoserine). NADP(+) contacts are provided by threonine 56, tryptophan 57, glutamine 63, and aspartate 85. Catalysis depends on tyrosine 90, which acts as the Proton donor/acceptor. Position 112 is a phosphoserine (serine 112). Lysine 124 carries the N6-acetyllysine modification. NADP(+)-binding residues include asparagine 158, serine 188, arginine 189, glutamine 214, tryptophan 243, serine 244, proline 245, leucine 246, alanine 247, cysteine 248, lysine 254, tyrosine 262, arginine 264, glycine 323, serine 325, glutamine 329, glutamate 332, and asparagine 333.

This sequence belongs to the shaker potassium channel beta subunit family. Homotetramer. Interaction with tetrameric potassium channel alpha subunits gives rise to a heterooctamer. Identified in potassium channel complexes containing KCNA1, KCNA2, KCNA4, KCNA5, KCNA6, KCNAB1, KCNAB2 and KCND3. Interacts (in unphosphorylated form) with MAPRE1. Forms a ternary complex with SQSTM1 and PRKCZ. Phosphorylated by PRKCZ; may be regulated by incorporation in a complex composed of PRKCZ and SQSTM1. As to expression, detected in brain. Detected at basket cell terminals in cerebellum and in the juxtaparanodal region of nodes of Ranvier (at protein level). Strongest expression in brain and eye. Highest levels in brain detected in brainstem and diencephalon. Strong expression also detected in lung and heart. Moderate expression in kidney, T-lymphocytes and skeletal muscle.

The protein localises to the cytoplasm. It localises to the membrane. Its subcellular location is the cell membrane. It is found in the cell projection. The protein resides in the axon. The protein localises to the synapse. It localises to the synaptosome. Its subcellular location is the cytoskeleton. The catalysed reaction is hydroxyacetone + NADP(+) = methylglyoxal + NADPH + H(+). It catalyses the reaction (E)-4-oxonon-2-en-1-ol + NADP(+) = (E)-4-oxonon-2-enal + NADPH + H(+). Regulatory subunit of the voltage-gated potassium (Kv) Shaker channel family. Shaker channels are composed of pore-forming and potassium-conducting alpha subunits and of regulatory beta subunits. The beta-2/KCNAB2 subunit promotes potassium channel closure via a mechanism that does not involve physical obstruction of the channel pore. Promotes the inactivation of Kv1.4/KCNA4 and Kv1.5/KCNA5 alpha subunit-containing channels. Displays nicotinamide adenine dinucleotide phosphate (NADPH)-dependent aldoketoreductase activity by catalyzing the NADPH-dependent reduction of a wide range of aldehyde and ketone substrates. Substrate specificity includes methylglyoxal, 9,10-phenanthrenequinone, prostaglandin J2, 4-nitrobenzaldehyde, 4-nitroacetophenone and 4-oxo-trans-2-nonenal (in vitro, no physiological substrate identified yet). The binding of oxidized and reduced nucleotide cofactors alters Kv channel gating and may contribute to dynamic fine tuning of cell excitability. Contributes to the regulation of nerve signaling, and prevents neuronal hyperexcitability. The polypeptide is Voltage-gated potassium channel subunit beta-2 (Mus musculus (Mouse)).